Reading from the N-terminus, the 146-residue chain is Large ribosomal subunit protein mL41 (146 aa).

The transit peptide at 1–16 directs the protein to the mitochondrion; that stretch reads MKGSPISQFSKTSINA.

Belongs to the mitochondrion-specific ribosomal protein mL41 family. In terms of assembly, component of the mitochondrial large ribosomal subunit (mt-LSU). Mature yeast 74S mitochondrial ribosomes consist of a small (37S) and a large (54S) subunit. The 37S small subunit contains a 15S ribosomal RNA (15S mt-rRNA) and 34 different proteins. The 54S large subunit contains a 21S rRNA (21S mt-rRNA) and 46 different proteins.

Its subcellular location is the mitochondrion. Component of the mitochondrial ribosome (mitoribosome), a dedicated translation machinery responsible for the synthesis of mitochondrial genome-encoded proteins, including at least some of the essential transmembrane subunits of the mitochondrial respiratory chain. The mitoribosomes are attached to the mitochondrial inner membrane and translation products are cotranslationally integrated into the membrane. This Saccharomyces cerevisiae (strain ATCC 204508 / S288c) (Baker's yeast) protein is Large ribosomal subunit protein mL41 (MRPL27).